The primary structure comprises 3391 residues: Genome polyprotein (3391 aa).

Residues Met-1–Met-15 are interaction with host EXOC1. Residues Met-1–Ser-101 lie on the Cytoplasmic side of the membrane. The tract at residues Leu-37–Phe-72 is hydrophobic; homodimerization of capsid protein C. The propeptide at Ser-101–Ala-114 is ER anchor for the capsid protein C, removed in mature form by serine protease NS3. A helical transmembrane segment spans residues Val-102–Thr-119. Residues Arg-120–Leu-242 are Extracellular-facing. The N-linked (GlcNAc...) asparagine; by host glycan is linked to Asn-183. A helical transmembrane segment spans residues Arg-243–Thr-260. A topological domain (cytoplasmic) is located at residue Ser-261. A helical membrane pass occupies residues Ile-262–Ala-280. Residues Met-281–Val-725 are Extracellular-facing. Disulfide bonds link Cys-283-Cys-310, Cys-340-Cys-401, Cys-354-Cys-385, and Cys-372-Cys-396. Asn-347 carries N-linked (GlcNAc...) asparagine; by host glycosylation. Residues Asp-378–Gly-391 are fusion peptide. N-linked (GlcNAc...) asparagine; by host glycosylation is present at Asn-433. 2 cysteine pairs are disulfide-bonded: Cys-465-Cys-565 and Cys-582-Cys-613. The chain crosses the membrane as a helical span at residues Leu-726 to Gly-746. Topologically, residues Leu-747 to Thr-752 are cytoplasmic. A helical membrane pass occupies residues Ser-753–Gln-773. Residues Ala-774 to Thr-1198 are Extracellular-facing. 6 disulfides stabilise this stretch: Cys-778–Cys-789, Cys-829–Cys-917, Cys-953–Cys-997, Cys-1054–Cys-1103, Cys-1065–Cys-1087, and Cys-1086–Cys-1090. Residues Asn-904 and Asn-981 are each glycosylated (N-linked (GlcNAc...) asparagine; by host). Asn-1189 carries N-linked (GlcNAc...) asparagine; by host glycosylation. The helical transmembrane segment at Thr-1199 to Phe-1219 threads the bilayer. Residues Arg-1220–Arg-1225 lie on the Cytoplasmic side of the membrane. The chain crosses the membrane as a helical span at residues Glu-1226–Asn-1244. The Lumenal portion of the chain corresponds to Ser-1245 to Ser-1268. The chain crosses the membrane as a helical span at residues His-1269 to Tyr-1289. Position 1290 (Ala-1290) is a topological domain, cytoplasmic. A helical membrane pass occupies residues Trp-1291–Ser-1309. Residues Thr-1310–Lys-1314 lie on the Lumenal side of the membrane. Residues Thr-1315–Ile-1335 form a helical membrane-spanning segment. Topologically, residues Ala-1336 to Ser-1345 are cytoplasmic. A helical membrane pass occupies residues Trp-1346–Leu-1366. Topologically, residues Lys-1367 to Asp-1369 are lumenal. The chain crosses the membrane as a helical span at residues Val-1370 to Gly-1390. The Cytoplasmic portion of the chain corresponds to Ser-1391–Thr-1446. Residues Leu-1397–Asp-1436 form an interacts with and activates NS3 protease region. Residues Leu-1447–Phe-1467 constitute an intramembrane region (helical). Topologically, residues Trp-1468 to Thr-2147 are cytoplasmic. The Peptidase S7 domain maps to Ser-1475 to Glu-1652. Residues His-1525, Asp-1549, and Ser-1609 each act as charge relay system; for serine protease NS3 activity in the active site. The region spanning Asp-1655–Glu-1811 is the Helicase ATP-binding domain. An important for RNA-binding region spans residues Arg-1659–Asn-1662. Residue Leu-1668–Thr-1675 coordinates ATP. The short motif at Asp-1759 to His-1762 is the DEAH box element. The 168-residue stretch at Ser-1821 to Arg-1988 folds into the Helicase C-terminal domain. N6-acetyllysine; by host is present on Lys-1863. A helical membrane pass occupies residues Leu-2148 to Gly-2168. The Lumenal segment spans residues Lys-2169 to Gly-2170. Positions Leu-2171–Ala-2191 form an intramembrane region, helical. A topological domain (lumenal) is located at residue Ser-2192. A helical membrane pass occupies residues Val-2193 to Ile-2213. At Pro-2214–Ala-2228 the chain is on the cytoplasmic side. Residues Tyr-2229–Leu-2249 traverse the membrane as a helical segment. Topologically, residues Glu-2250 to Asp-2275 are lumenal. Residues Leu-2276–Met-2296 constitute an intramembrane region (helical). Topologically, residues Arg-2297–Pro-2348 are lumenal. 2 N-linked (GlcNAc...) asparagine; by host glycosylation sites follow: Asn-2302 and Asn-2306. The chain crosses the membrane as a helical span at residues Leu-2349 to Leu-2369. The Cytoplasmic segment spans residues Gln-2370 to Gln-2414. The chain crosses the membrane as a helical span at residues Ile-2415–Cys-2435. Residues Glu-2436–Thr-2460 lie on the Lumenal side of the membrane. N-linked (GlcNAc...) asparagine; by host glycosylation occurs at Asn-2458. Residues Ile-2461–Phe-2481 traverse the membrane as a helical segment. Residues Ser-2482 to Trp-3391 lie on the Cytoplasmic side of the membrane. Positions Thr-2494–His-2755 constitute an mRNA cap 0-1 NS5-type MT domain. Ser-2548 lines the S-adenosyl-L-methionine pocket. Position 2548 is a phosphoserine (Ser-2548). Lys-2553 acts as the For 2'-O-MTase activity in catalysis. Positions Val-2569–Leu-2572 match the SUMO-interacting motif motif. S-adenosyl-L-methionine-binding residues include Gly-2578, Trp-2579, Thr-2596, Lys-2597, Asp-2623, and Val-2624. The active-site For 2'-O-MTase activity is the Asp-2638. Ile-2639 provides a ligand contact to S-adenosyl-L-methionine. Residues Lys-2672 and Glu-2708 each act as for 2'-O-MTase activity in the active site. Tyr-2710 is an S-adenosyl-L-methionine binding site. Glu-2929, His-2933, Cys-2938, and Cys-2941 together coordinate Zn(2+). Residues Gly-3019–Ala-3168 form the RdRp catalytic domain. 3 residues coordinate Zn(2+): His-3203, Cys-3219, and Cys-3338.

This sequence in the N-terminal section; belongs to the class I-like SAM-binding methyltransferase superfamily. mRNA cap 0-1 NS5-type methyltransferase family. In terms of assembly, homodimer. Interacts (via N-terminus) with host EXOC1 (via C-terminus); this interaction results in EXOC1 degradation through the proteasome degradation pathway. Forms heterodimers with envelope protein E in the endoplasmic reticulum and Golgi. As to quaternary structure, homodimer; in the endoplasmic reticulum and Golgi. Interacts with protein prM. Interacts with non-structural protein 1. In terms of assembly, homodimer; Homohexamer when secreted. Interacts with envelope protein E. Interacts (via N-terminus) with serine protease NS3. As to quaternary structure, forms a heterodimer with serine protease NS3. May form homooligomers. In terms of assembly, forms a heterodimer with NS2B. Interacts with NS4B. Interacts with unphosphorylated RNA-directed RNA polymerase NS5; this interaction stimulates RNA-directed RNA polymerase NS5 guanylyltransferase activity. Interacts with host SHFL. Interacts with host MAVS; this interaction inhibits the synthesis of IFN-beta. Interacts with host SHFL. Interacts with host AUP1; the interaction occurs in the presence of Dengue virus NS4B and induces lipophagy which facilitates production of virus progeny particles. As to quaternary structure, interacts with serine protease NS3. In terms of assembly, homodimer. Interacts with host STAT2; this interaction inhibits the phosphorylation of the latter, and, when all viral proteins are present (polyprotein), targets STAT2 for degradation. Interacts with serine protease NS3. Post-translationally, specific enzymatic cleavages in vivo yield mature proteins. Cleavages in the lumen of endoplasmic reticulum are performed by host signal peptidase, whereas cleavages in the cytoplasmic side are performed by serine protease NS3. Signal cleavage at the 2K-4B site requires a prior NS3 protease-mediated cleavage at the 4A-2K site. Cleaved in post-Golgi vesicles by a host furin, releasing the mature small envelope protein M, and peptide pr. This cleavage is incomplete as up to 30% of viral particles still carry uncleaved prM. In terms of processing, N-glycosylated. Post-translationally, N-glycosylated. The excreted form is glycosylated and this is required for efficient secretion of the protein from infected cells. Acetylated by host KAT5. Acetylation modulates NS3 RNA-binding and unwinding activities and plays an important positive role for viral replication. In terms of processing, sumoylation of RNA-directed RNA polymerase NS5 increases NS5 protein stability allowing proper viral RNA replication. Post-translationally, phosphorylated on serines residues. This phosphorylation may trigger NS5 nuclear localization.

Its subcellular location is the virion. The protein resides in the host nucleus. The protein localises to the host cytoplasm. It is found in the host perinuclear region. It localises to the secreted. Its subcellular location is the virion membrane. The protein resides in the host endoplasmic reticulum membrane. The protein localises to the host mitochondrion. It catalyses the reaction Selective hydrolysis of -Xaa-Xaa-|-Yaa- bonds in which each of the Xaa can be either Arg or Lys and Yaa can be either Ser or Ala.. The catalysed reaction is RNA(n) + a ribonucleoside 5'-triphosphate = RNA(n+1) + diphosphate. The enzyme catalyses a ribonucleoside 5'-triphosphate + H2O = a ribonucleoside 5'-diphosphate + phosphate + H(+). It carries out the reaction ATP + H2O = ADP + phosphate + H(+). It catalyses the reaction a 5'-end (5'-triphosphoguanosine)-ribonucleoside in mRNA + S-adenosyl-L-methionine = a 5'-end (N(7)-methyl 5'-triphosphoguanosine)-ribonucleoside in mRNA + S-adenosyl-L-homocysteine. The catalysed reaction is a 5'-end (N(7)-methyl 5'-triphosphoguanosine)-ribonucleoside in mRNA + S-adenosyl-L-methionine = a 5'-end (N(7)-methyl 5'-triphosphoguanosine)-(2'-O-methyl-ribonucleoside) in mRNA + S-adenosyl-L-homocysteine + H(+). Its function is as follows. Plays a role in virus budding by binding to the cell membrane and gathering the viral RNA into a nucleocapsid that forms the core of a mature virus particle. During virus entry, may induce genome penetration into the host cytoplasm after hemifusion induced by the surface proteins. Can migrate to the cell nucleus where it modulates host functions. Overcomes the anti-viral effects of host EXOC1 by sequestering and degrading the latter through the proteasome degradation pathway. In terms of biological role, inhibits RNA silencing by interfering with host Dicer. Functionally, prevents premature fusion activity of envelope proteins in trans-Golgi by binding to envelope protein E at pH6.0. After virion release in extracellular space, gets dissociated from E dimers. Acts as a chaperone for envelope protein E during intracellular virion assembly by masking and inactivating envelope protein E fusion peptide. prM is the only viral peptide matured by host furin in the trans-Golgi network probably to avoid catastrophic activation of the viral fusion activity in acidic Golgi compartment prior to virion release. prM-E cleavage is inefficient, and many virions are only partially matured. These uncleaved prM would play a role in immune evasion. Its function is as follows. May play a role in virus budding. Exerts cytotoxic effects by activating a mitochondrial apoptotic pathway through M ectodomain. May display a viroporin activity. In terms of biological role, binds to host cell surface receptor and mediates fusion between viral and cellular membranes. Envelope protein is synthesized in the endoplasmic reticulum in the form of heterodimer with protein prM. They play a role in virion budding in the ER, and the newly formed immature particle is covered with 60 spikes composed of heterodimer between precursor prM and envelope protein E. The virion is transported to the Golgi apparatus where the low pH causes dissociation of PrM-E heterodimers and formation of E homodimers. prM-E cleavage is inefficient, and many virions are only partially matured. These uncleaved prM would play a role in immune evasion. Functionally, involved in immune evasion, pathogenesis and viral replication. Once cleaved off the polyprotein, is targeted to three destinations: the viral replication cycle, the plasma membrane and the extracellular compartment. Essential for viral replication. Required for formation of the replication complex and recruitment of other non-structural proteins to the ER-derived membrane structures. Excreted as a hexameric lipoparticle that plays a role against host immune response. Antagonizing the complement function. Binds to the host macrophages and dendritic cells. Inhibits signal transduction originating from Toll-like receptor 3 (TLR3). Disrupts the host endothelial glycocalyx layer of host pulmonary microvascular endothelial cells, inducing degradation of sialic acid and shedding of heparan sulfate proteoglycans. NS1 induces expression of sialidases, heparanase, and activates cathepsin L, which activates heparanase via enzymatic cleavage. These effects are probably linked to the endothelial hyperpermeability observed in severe dengue disease. Its function is as follows. Component of the viral RNA replication complex that functions in virion assembly and antagonizes the host immune response. In terms of biological role, required cofactor for the serine protease function of NS3. May have membrane-destabilizing activity and form viroporins. Functionally, displays three enzymatic activities: serine protease, NTPase and RNA c. NS3 serine protease, in association with NS2B, performs its autocleavage and cleaves the polyprotein at dibasic sites in the cytoplasm: C-prM, NS2A-NS2B, NS2B-NS3, NS3-NS4A, NS4A-2K and NS4B-NS5. NS3 RNA helicase binds RNA and unwinds dsRNA in the 3' to 5' direction. Regulates the ATPase activity of the NS3 helicase activity. NS4A allows NS3 helicase to conserve energy during unwinding. Plays a role in the inhibition of the host innate immune response. Interacts with host MAVS and thereby prevents the interaction between RIGI and MAVS. In turn, IFN-beta production is impaired. Interacts with host AUP1 which mediates induction of lipophagy in host cells and facilitates production of virus progeny particles. Its function is as follows. Functions as a signal peptide for NS4B and is required for the interferon antagonism activity of the latter. In terms of biological role, induces the formation of ER-derived membrane vesicles where the viral replication takes place. Inhibits interferon (IFN)-induced host STAT1 phosphorylation and nuclear translocation, thereby preventing the establishment of cellular antiviral state by blocking the IFN-alpha/beta pathway. Functionally, replicates the viral (+) and (-) RNA genome, and performs the capping of genomes in the cytoplasm. NS5 methylates viral RNA cap at guanine N-7 and ribose 2'-O positions. Besides its role in RNA genome replication, also prevents the establishment of cellular antiviral state by blocking the interferon-alpha/beta (IFN-alpha/beta) signaling pathway. Inhibits host TYK2 and STAT2 phosphorylation, thereby preventing activation of JAK-STAT signaling pathway. This is Genome polyprotein from Aedes aegypti (Yellowfever mosquito).